Here is a 338-residue protein sequence, read N- to C-terminus: tRNA N6-adenosine threonylcarbamoyltransferase (338 aa).

Residues histidine 111 and histidine 115 each coordinate Fe cation. Substrate is bound by residues 134–138 (LVSGG), aspartate 167, glycine 180, and asparagine 272. A Fe cation-binding site is contributed by aspartate 300.

It belongs to the KAE1 / TsaD family. Requires Fe(2+) as cofactor.

It is found in the cytoplasm. It carries out the reaction L-threonylcarbamoyladenylate + adenosine(37) in tRNA = N(6)-L-threonylcarbamoyladenosine(37) in tRNA + AMP + H(+). Its function is as follows. Required for the formation of a threonylcarbamoyl group on adenosine at position 37 (t(6)A37) in tRNAs that read codons beginning with adenine. Is involved in the transfer of the threonylcarbamoyl moiety of threonylcarbamoyl-AMP (TC-AMP) to the N6 group of A37, together with TsaE and TsaB. TsaD likely plays a direct catalytic role in this reaction. This is tRNA N6-adenosine threonylcarbamoyltransferase from Shewanella halifaxensis (strain HAW-EB4).